We begin with the raw amino-acid sequence, 370 residues long: MILKRISILNYKNLEQVELNFSAKLNCFFGQNGMGKTNLLDAVYFLSFCKSAGNPIDSQNIRHEQDFFVIQGFYEAMDGTPEEIYCGMKRRSKKQFKRNKKEYSRLSDHIGFIPLVMVSPADSELIAGGSDERRRFMDVVISQYDKEYLDALIRYNKALVQRNTLLKSEQPIEEELFLVWEEMMAQAGEVVFRKREAFISEFIPIFQSFYSYISQDKEQVGLTYESHARNASLLEVLKESRVRDKIMGYSLRGIHKDELNMLLGDFPIKREGSQGQNKTYLVALKLAQFDFLKRTGSTVPLLLLDDIFDKLDASRVEQIVKLVAGDNFGQIFITDTNREHLDRILYKVGSDYKMFRVESGAINEMEEKER.

30–37 (GQNGMGKT) provides a ligand contact to ATP.

Belongs to the RecF family.

It is found in the cytoplasm. Functionally, the RecF protein is involved in DNA metabolism; it is required for DNA replication and normal SOS inducibility. RecF binds preferentially to single-stranded, linear DNA. It also seems to bind ATP. The chain is DNA replication and repair protein RecF from Bacteroides fragilis (strain YCH46).